Here is a 245-residue protein sequence, read N- to C-terminus: Fibroblast growth factor 3 (245 aa).

A signal peptide spans 1 to 17 (MGLIWLLLLSLLEPSWP). Residue asparagine 65 is glycosylated (N-linked (GlcNAc...) asparagine). Disordered regions lie at residues 137 to 181 (GSSG…FLPR) and 195 to 245 (QSSQ…LAVA). Basic residues predominate over residues 161–173 (GRPRRGFKTRRTQ). Residues 226-238 (TLSTRATPSTQLH) are compositionally biased toward polar residues.

The protein belongs to the heparin-binding growth factors family. As to quaternary structure, interacts with FGFR1 and FGFR2. Affinity between fibroblast growth factors (FGFs) and their receptors is increased by heparan sulfate glycosaminoglycans that function as coreceptors. Post-translationally, glycosylated.

The protein localises to the nucleus. It is found in the endoplasmic reticulum. It localises to the golgi apparatus. In terms of biological role, plays an important role in the regulation of embryonic development, cell proliferation, and cell differentiation. Required for normal ear development. The protein is Fibroblast growth factor 3 (Fgf3) of Mus musculus (Mouse).